The sequence spans 389 residues: Nuclear receptor subfamily 2 group F member 1-B (389 aa).

The disordered stretch occupies residues 19-39; the sequence is DDQSAAGREHLQHRHSPKSAE. A DNA-binding region (nuclear receptor) is located at residues 51–126; the sequence is HVECVVCGDK…VGMRREAVQR (76 aa). NR C4-type zinc fingers lie at residues 54–74 and 90–109; these read CVVCGDKSSGKHYGQFTCEGC and CRANRNCPVDQHHRNQCQYC. The region spanning 152–378 is the NR LBD domain; sequence YLSGYISLLL…TLIRDMLLSG (227 aa).

It belongs to the nuclear hormone receptor family. NR2 subfamily. Expressed the retina, where expression is restricted to the outer nuclear layer.

It localises to the nucleus. In terms of biological role, putative transcription factor that is required in photoreceptor cells precursors during eye development. The protein is Nuclear receptor subfamily 2 group F member 1-B of Danio rerio (Zebrafish).